The following is a 433-amino-acid chain: uncharacterized protein (433 aa).

Residues 36–58 (YYYYVQLAFKMLVGVLKNLPVVY) form a helical membrane-spanning segment. The tract at residues 169 to 433 (VRVPSRDLQP…GEGRDLPEDN (265 aa)) is disordered. Acidic residues-rich tracts occupy residues 216–227 (GEPGENGDESDE) and 234–254 (GDED…YESD). Composition is skewed to basic and acidic residues over residues 265–280 (EPDR…RGSE), 354–364 (GGRRPARRDSP), and 422–433 (RRGEGRDLPEDN).

It is found in the host membrane. This is an uncharacterized protein from Psittacid herpesvirus 1 (isolate Amazon parrot/-/97-0001/1997) (PsHV-1).